The primary structure comprises 172 residues: Achaete-scute homolog 4 (172 aa).

The bHLH domain occupies 72–124; the sequence is AFLRKRNERERQRVRCVNEGYARLRDHLPRELADKRLSKVETLRAAIDYIKHL. The disordered stretch occupies residues 144–172; that stretch reads QRRAECNSDGESKASSAPSPSSEPEEGGS. The segment covering 145–155 has biased composition (basic and acidic residues); that stretch reads RRAECNSDGES. Low complexity predominate over residues 156 to 165; that stretch reads KASSAPSPSS.

As to expression, expressed in skin. 7-fold higher expression in fetal skin than in adult skin. Weak expression also detected in fetal lung, aorta and brain, and in adult stomach, kidney, ovary and breast.

The protein localises to the nucleus. Could be a transcriptional regulator involved in skin development. This is Achaete-scute homolog 4 (ASCL4) from Homo sapiens (Human).